A 357-amino-acid chain; its full sequence is uncharacterized protein (357 aa).

Positions S120–P145 are disordered.

This is an uncharacterized protein from Caenorhabditis elegans.